The following is an 805-amino-acid chain: Transforming acidic coiled-coil-containing protein 1 (805 aa).

Ala-2 carries the N-acetylalanine modification. Ala-2 carries the N-myristoyl glycine lipid modification. An interaction with LSM7 and SNRPG region spans residues 2–55 (AFSPWQILSPVQWAKWTWSAVRGGAAGEDEAGGPEGDPEEEDSQAETKSLSFSS). 3 positions are modified to phosphoserine: Ser-4, Ser-10, and Ser-44. Residues 23-140 (RGGAAGEDEA…SVKNFREEPE (118 aa)) form a disordered region. Positions 28 to 45 (GEDEAGGPEGDPEEEDSQ) are enriched in acidic residues. Composition is skewed to polar residues over residues 47–60 (ETKS…SEGN) and 111–128 (SKTC…QAID). A compositionally biased stretch (basic and acidic residues) spans 130–140 (HSVKNFREEPE). Phosphoserine occurs at positions 147 and 153. The tract at residues 152–259 (FSIETKDSTD…TNAAVEGTPL (108 aa)) is interaction with TDRD7. An interaction with YEATS4 region spans residues 206–427 (EASAEADLKA…DPDNFDESMD (222 aa)). SPAZ domains lie at 215 to 297 (AGNS…TPGT) and 359 to 507 (SKSA…TDEE). The disordered stretch occupies residues 215 to 457 (AGNSCPELVP…VNEILESPKK (243 aa)). The Bipartite nuclear localization signal 1 motif lies at 226–241 (RRSKLRKPKPVPLRKK). A compositionally biased stretch (basic residues) spans 226–242 (RRSKLRKPKPVPLRKKA). Position 228 is a phosphoserine; by AURKC (Ser-228). 2 positions are modified to phosphoserine: Ser-248 and Ser-276. Composition is skewed to polar residues over residues 296-305 (GTLSSDTNDS), 377-413 (LSQT…SSEG), and 431-447 (PTTT…TGNH). Phosphoserine is present on residues Ser-381 and Ser-406. The Bipartite nuclear localization signal 2 motif lies at 455–471 (PKKAKSRLITSGCKVKK). Position 483 is a phosphoserine (Ser-483). Residues 493–526 (ISDISNRDGHATDEEKLASTSCGQKSAGAEVKGE) form a disordered region. The span at 497–509 (SNRDGHATDEEKL) shows a compositional bias: basic and acidic residues. Phosphotyrosine is present on Tyr-533. Ser-591 carries the phosphoserine modification. A coiled-coil region spans residues 610 to 805 (IREEIITKEI…ELIAKLGKTD (196 aa)). Residues 701-805 (VLEGFKKNEE…ELIAKLGKTD (105 aa)) are interaction with CH-TOG.

It belongs to the TACC family. As to quaternary structure, interacts with KIAA0097/CH-TOG and with the oncogenic transcription factor YEATS4. Interacts with AURKA, AURKB and AURKC. Interacts with LSM7, TDRD7 and SNRPG. Interacts with GCN5L2 and PCAF. Interacts with the thyroid hormone receptors THRB and THRA, predominantly with isoform alpha-2. The interaction with THRA isoform alpha-1 and THRB is decreased in the presence of thyroid hormone T3. Also interacts with other nuclear receptors, including ESR1, NR3C1, PPARG, RARA and RXRA, preferentially in the absence of their hormonal ligands. Post-translationally, isoform 1 is heavily phosphorylated; isoform 6 is not. Isoform 1, isoform 3 and isoform 5 are ubiquitous. Isoform 2 is strongly expressed in the brain, weakly detectable in lung and colon, and overexpressed in gastric cancer. Isoform 4 is not detected in normal tissues, but strong expression was found in gastric cancer tissues. Down-regulated in a subset of cases of breast cancer.

The protein localises to the cytoplasm. It is found in the nucleus. It localises to the cytoskeleton. The protein resides in the microtubule organizing center. Its subcellular location is the centrosome. The protein localises to the midbody. It is found in the membrane. Involved in transcription regulation induced by nuclear receptors, including in T3 thyroid hormone and all-trans retinoic acid pathways. Might promote the nuclear localization of the receptors. Likely involved in the processes that promote cell division prior to the formation of differentiated tissues. This Homo sapiens (Human) protein is Transforming acidic coiled-coil-containing protein 1 (TACC1).